A 349-amino-acid chain; its full sequence is Hydroxymethylglutaryl-CoA synthase (349 aa).

(3S)-3-hydroxy-3-methylglutaryl-CoA is bound at residue Asp29. Glu81 functions as the Proton donor/acceptor in the catalytic mechanism. (3S)-3-hydroxy-3-methylglutaryl-CoA-binding residues include Cys113, Ser154, Thr202, and His235. Cys113 (acyl-thioester intermediate) is an active-site residue. The Proton donor/acceptor role is filled by His235. Arg240 serves as a coordination point for CoA. Positions 244, 267, and 297 each coordinate (3S)-3-hydroxy-3-methylglutaryl-CoA.

It belongs to the thiolase-like superfamily. Archaeal HMG-CoA synthase family. Interacts with acetoacetyl-CoA thiolase that catalyzes the precedent step in the pathway and with a DUF35 protein. The acetoacetyl-CoA thiolase/HMG-CoA synthase complex channels the intermediate via a fused CoA-binding site, which allows for efficient coupling of the endergonic thiolase reaction with the exergonic HMGCS reaction.

It carries out the reaction acetoacetyl-CoA + acetyl-CoA + H2O = (3S)-3-hydroxy-3-methylglutaryl-CoA + CoA + H(+). It functions in the pathway metabolic intermediate biosynthesis; (R)-mevalonate biosynthesis; (R)-mevalonate from acetyl-CoA: step 2/3. Its function is as follows. Catalyzes the condensation of acetyl-CoA with acetoacetyl-CoA to form 3-hydroxy-3-methylglutaryl-CoA (HMG-CoA). Functions in the mevalonate (MVA) pathway leading to isopentenyl diphosphate (IPP), a key precursor for the biosynthesis of isoprenoid compounds that are building blocks of archaeal membrane lipids. The protein is Hydroxymethylglutaryl-CoA synthase of Pyrobaculum arsenaticum (strain DSM 13514 / JCM 11321 / PZ6).